Consider the following 119-residue polypeptide: NADH-quinone oxidoreductase subunit A (119 aa).

3 consecutive transmembrane segments (helical) span residues 7–27 (FPVL…VSIG), 63–83 (LVAI…PWGV), and 88–108 (IGWP…LGFA).

Belongs to the complex I subunit 3 family. As to quaternary structure, NDH-1 is composed of 14 different subunits. Subunits NuoA, H, J, K, L, M, N constitute the membrane sector of the complex.

It localises to the cell inner membrane. It carries out the reaction a quinone + NADH + 5 H(+)(in) = a quinol + NAD(+) + 4 H(+)(out). Functionally, NDH-1 shuttles electrons from NADH, via FMN and iron-sulfur (Fe-S) centers, to quinones in the respiratory chain. The immediate electron acceptor for the enzyme in this species is believed to be ubiquinone. Couples the redox reaction to proton translocation (for every two electrons transferred, four hydrogen ions are translocated across the cytoplasmic membrane), and thus conserves the redox energy in a proton gradient. The polypeptide is NADH-quinone oxidoreductase subunit A (Paraburkholderia phytofirmans (strain DSM 17436 / LMG 22146 / PsJN) (Burkholderia phytofirmans)).